Reading from the N-terminus, the 429-residue chain is Methanol:N,N-dimethyl-4-nitrosoaniline oxidoreductase (429 aa).

This sequence belongs to the iron-containing alcohol dehydrogenase family. As to quaternary structure, homodecamer. It depends on Mg(2+) as a cofactor. Zn(2+) is required as a cofactor. Requires NADPH as cofactor.

The catalysed reaction is methanol + A = formaldehyde + AH2. Its activity is regulated as follows. Inhibited by azide and hydrazine. Functionally, catalyzes the oxidation of methanol to yield formaldehyde. While the in vivo electron acceptor is not known, N,N-dimethyl-4-nitrosoaniline (NDMA) can serve this function in vitro and is reduced to 4-(hydroxylamino)-N,N-dimethylaniline. It can also use various other primary alcohols, polyols and formaldehyde. In addition, MNO is able to produce methylformate from methanol plus formaldehyde, and possesses a formaldehyde dismutase and a NADH-dependent formaldehyde reductase activity. This chain is Methanol:N,N-dimethyl-4-nitrosoaniline oxidoreductase (mno), found in Amycolatopsis methanolica.